The chain runs to 135 residues: Large ribosomal subunit protein bL17 (135 aa).

Belongs to the bacterial ribosomal protein bL17 family. As to quaternary structure, part of the 50S ribosomal subunit. Contacts protein L32.

In Rhodopseudomonas palustris (strain BisB18), this protein is Large ribosomal subunit protein bL17.